A 379-amino-acid polypeptide reads, in one-letter code: Putative cyclic ADP-D-ribose synthase TIR2 (379 aa).

Positions 254-379 (KVYDVFISHS…TISWTTGLVK (126 aa)) constitute a TIR domain. E335 is a catalytic residue.

As to quaternary structure, homodimer.

Its subcellular location is the cytoplasm. Activated upon phage infection. One of 2 TIR-like protein components of the Thoeris antiviral defense system, composed of ThsA, TIR1 (thsB1) and TIR2 (thsB2). Phage infection activates this protein; by 70 minutes post-infection with phage SPO1, TIR2 generates a signal molecule that in turn activates the NAD(+) hydrolase activity of ThsA (tested with B.cereus). The signal is similar to cyclic ADP-D-ribose, but how it differs is unknown. Expression of Thoeris in B.subtilis (strain BEST7003) confers resistance to phages phi29, phi3T, SPBeta, SBSphi11, SBSphi13, SBSphiJ, SPO1 and SPR but not SBSphiC. The TIR paralogs confer resistance to different phages; this subunit confers resistance to phi3T, SPBeta, SBSphi13, SBSphiJ, SPO1 and SPR but not phi29, SBSphi11 or SBSphiC. There is overlap in the phage range for this system, both TIR1 and TIR2 are activated by SBSphi13, SBSphiJ, SPO1 and SPR. Probably hydrolyzes NAD(+) to make a cyclic ADP-D-ribose (cADPR) signaling molecule; might make 3'cADPR. The polypeptide is Putative cyclic ADP-D-ribose synthase TIR2 (Cytobacillus dafuensis (Bacillus dafuensis)).